Reading from the N-terminus, the 24-residue chain is MLYWLGILIAYADRRPDKVFTLIR.

The sequence is that of Protein YriA from Escherichia coli (strain K12).